The primary structure comprises 128 residues: Small ribosomal subunit protein uS11 (128 aa).

Belongs to the universal ribosomal protein uS11 family. As to quaternary structure, part of the 30S ribosomal subunit. Interacts with proteins S7 and S18. Binds to IF-3.

Functionally, located on the platform of the 30S subunit, it bridges several disparate RNA helices of the 16S rRNA. Forms part of the Shine-Dalgarno cleft in the 70S ribosome. This is Small ribosomal subunit protein uS11 from Phytoplasma australiense.